The primary structure comprises 406 residues: Tryptophan 2,3-dioxygenase (406 aa).

Substrate-binding positions include 72 to 76 (FIVTH) and Arg-144. His-328 contributes to the heme binding site. Residue Thr-342 participates in substrate binding.

Belongs to the tryptophan 2,3-dioxygenase family. In terms of assembly, homotetramer. Dimer of dimers. Heme serves as cofactor.

The enzyme catalyses L-tryptophan + O2 = N-formyl-L-kynurenine. It participates in amino-acid degradation; L-tryptophan degradation via kynurenine pathway; L-kynurenine from L-tryptophan: step 1/2. Heme-dependent dioxygenase that catalyzes the oxidative cleavage of the L-tryptophan (L-Trp) pyrrole ring and converts L-tryptophan to N-formyl-L-kynurenine. Catalyzes the oxidative cleavage of the indole moiety. The polypeptide is Tryptophan 2,3-dioxygenase (Xenopus tropicalis (Western clawed frog)).